The chain runs to 299 residues: UDP-N-acetylenolpyruvoylglucosamine reductase (299 aa).

Residues 28 to 193 form the FAD-binding PCMH-type domain; sequence KVGGPADILA…LSAKFELQAG (166 aa). Arginine 172 is an active-site residue. The active-site Proton donor is serine 222. Glutamate 292 is an active-site residue.

Requires FAD as cofactor.

It is found in the cytoplasm. It carries out the reaction UDP-N-acetyl-alpha-D-muramate + NADP(+) = UDP-N-acetyl-3-O-(1-carboxyvinyl)-alpha-D-glucosamine + NADPH + H(+). The protein operates within cell wall biogenesis; peptidoglycan biosynthesis. Its function is as follows. Cell wall formation. The sequence is that of UDP-N-acetylenolpyruvoylglucosamine reductase from Lactococcus lactis subsp. cremoris (strain MG1363).